Reading from the N-terminus, the 750-residue chain is Sulfhydryl oxidase 1 (750 aa).

The N-terminal stretch at 1-32 is a signal peptide; sequence MRRCGRHSGPPSLLLLLLLLPPLLLSVPGAYA. One can recognise a Thioredoxin domain in the interval 33 to 159; sequence ARLSVLYSSS…RMRLIDALES (127 aa). Residues C73 and C76 each act as nucleophile in the active site. 2 disulfides stabilise this stretch: C73-C76 and C104-C113. N133 and N246 each carry an N-linked (GlcNAc...) asparagine glycan. C396 and C408 form a disulfide bridge. The 108-residue stretch at 399–506 folds into the ERV/ALR sulfhydryl oxidase domain; sequence SEPHFRGFPC…EDPQFPKVQW (108 aa). Residues R404, W411, H415, D454, H458, 481 to 488, K503, and W506 each bind FAD; that span reads WTSHNRVN. C452 and C455 are disulfide-bonded. A disulfide bond links C512 and C515. Disordered regions lie at residues 545–567 and 585–632; these read VRDP…ASPN and EQAA…PEHT. The segment covering 587–597 has biased composition (low complexity); it reads AASAASPGATA. Residues 710-730 traverse the membrane as a helical segment; sequence FLDISLCVGLYSVSFMGLLAM.

Belongs to the quiescin-sulfhydryl oxidase (QSOX) family. Monomer. It depends on FAD as a cofactor. Post-translationally, N-glycosylated. O-glycosylated on Thr and Ser residues. As to expression, isoform 3: Detected in seminal vesicle fluid (at protein level). Isoform 1: Detected in brain, hypophysis, heart, testis and the seminal vesicle. Isoform 3: Highly expressed in the seminal vesicles followed by testis, heart, brain, thymus, hypophysis and lung. Also expressed in prostate, kidney, spleen, liver.

It localises to the golgi apparatus membrane. It is found in the secreted. The enzyme catalyses 2 R'C(R)SH + O2 = R'C(R)S-S(R)CR' + H2O2. In terms of biological role, catalyzes the oxidation of sulfhydryl groups in peptide and protein thiols to disulfides with the reduction of oxygen to hydrogen peroxide. Plays a role in disulfide bond formation in a variety of extracellular proteins. In fibroblasts, required for normal incorporation of laminin into the extracellular matrix, and thereby for normal cell-cell adhesion and cell migration. The polypeptide is Sulfhydryl oxidase 1 (Qsox1) (Rattus norvegicus (Rat)).